A 435-amino-acid polypeptide reads, in one-letter code: GTPase Der (435 aa).

2 EngA-type G domains span residues 4–167 (GIVA…PSHE) and 175–350 (TRVS…TALD). Residues 10 to 17 (GRPNVGKS), 57 to 61 (DTGGI), 119 to 122 (NKYD), 181 to 188 (GRPNVGKS), 228 to 232 (DTAGI), and 293 to 296 (NKWD) contribute to the GTP site. One can recognise a KH-like domain in the interval 351 to 435 (KKIKTSVFNE…PMSIIFRERK (85 aa)).

The protein belongs to the TRAFAC class TrmE-Era-EngA-EngB-Septin-like GTPase superfamily. EngA (Der) GTPase family. As to quaternary structure, associates with the 50S ribosomal subunit.

GTPase that plays an essential role in the late steps of ribosome biogenesis. The polypeptide is GTPase Der (Mesoplasma florum (strain ATCC 33453 / NBRC 100688 / NCTC 11704 / L1) (Acholeplasma florum)).